An 862-amino-acid chain; its full sequence is MNVLLEMAFLSQTLPDPYEDFIHHHLQYYGYFKAQKSSLPNSGTHQRVWRNSPRYMLNGSFGERDDFISDSLEKEMLLWPTCLSSTGHAHIDAVNRDSLLLSSPLLRTRQLIFDELDEASPRLREPRELFSCFSSRGPLQAPRWPIECEVIKENIHHIEWVPHQPEYFYQPTGSEKVPEIVGEEQGTVVYQLDSVPAEGTYFTSSRIGGKRGTIKELAVTLQGPDDNTLLFESRFESGNLQKAVRVGIYEYELTLRTDLYTDKHTQWFYFRVQNTRKDATYRFTIVNLLKPKSLYAVGMKPLMYSQLDATIYNIGWRREGREIKYYKNNVDDGQQPLYCLTWTTQFPHDQDTCFFAHFYPYTYTDLQCYLLSVANNPIQSQFCKLRALCRSLAGNTVYLLTITNPSRTPQEAAAKKAVVLSARVHPGESNSSWIMNGFLDFILSNSPDAQLLRDIFVFKVIPMLNPDGVIVGNYRCSLAGRDLNRHYKTVLKDSFPCIWYTKNMIKRLLEEREVLLYCDFHGHSRKNNIFLYGCHSNNRKHWLHERVFPLMLSKNAPDKFSFDSCNFKVQKCKEGTGRVVMWRMGIINSYTMESTFGGSTLGSKRDTHFTIEDLKSLGYHVCDTLLDFCDPDQTKYTQCLQELKELLQQEINKKLNNFGQDMDLEGNWSDIPLSDIESSTSGSDSSLSDGPPIRLLNIVADEPNQKTVLKNPKKKRLQTRKQRNEQYQKSYLMRELKLTENAPGRARFVSTLQKQPTFLKSPESPSPSVRRSENPRLNETQLSGREKGTSLDPPLTSPKNKERIQSKKPGFTASCSPKRSTNSSLGPAPDVKPNWSKTRYSATRKDHATMAVYPSLHIYTYP.

The Peptidase M14 domain maps to 359-629; it reads YPYTYTDLQC…HVCDTLLDFC (271 aa). 3 residues coordinate Zn(2+): His-425, Glu-428, and His-521. Glu-593 (proton donor/acceptor) is an active-site residue. Disordered regions lie at residues 669–692, 704–728, and 750–836; these read SDIP…DGPP, NQKT…EQYQ, and STLQ…PNWS. Over residues 674-689 the composition is skewed to low complexity; sequence SDIESSTSGSDSSLSD. Over residues 711–721 the composition is skewed to basic residues; the sequence is NPKKKRLQTRK. Over residues 813–825 the composition is skewed to polar residues; it reads ASCSPKRSTNSSL.

Belongs to the peptidase M14 family. Interacts with RARRES1, KIF11 and MAPRE1. Zn(2+) serves as cofactor. In terms of tissue distribution, widely expressed. Expressed in tissues with motile cilia such as testis, lung and trachea. Also detected in brain, eye, muscle, pancreas, intestine, stomach, pituitary, spleen, adrenal and kidney. Expressed in mitral and granular cells in brain.

The protein localises to the cytoplasm. Its subcellular location is the cytosol. It is found in the cytoskeleton. It localises to the microtubule organizing center. The protein resides in the centrosome. The protein localises to the centriole. Its subcellular location is the cilium basal body. It carries out the reaction (L-glutamyl)(n+1)-gamma-L-glutamyl-L-glutamyl-[protein] + H2O = (L-glutamyl)(n)-gamma-L-glutamyl-L-glutamyl-[protein] + L-glutamate. Inhibited by RARRES1. In terms of biological role, metallocarboxypeptidase that mediates deglutamylation of tubulin and non-tubulin target proteins. Catalyzes the removal of polyglutamate side chains present on the gamma-carboxyl group of glutamate residues within the C-terminal tail of tubulin protein. Specifically cleaves tubulin long-side-chains, while it is not able to remove the branching point glutamate. Also catalyzes the removal of polyglutamate residues from the carboxy-terminus of non-tubulin proteins such as MYLK. In Mus musculus (Mouse), this protein is Cytosolic carboxypeptidase 2.